An 895-amino-acid chain; its full sequence is Iron-regulated surface determinant protein H (895 aa).

The signal sequence occupies residues 1–40 (MNKHHPKLRSFYSIRKSTLGVASVIVSTLFLITSQHQAQA). Positions 42–85 (ENTNTSDKISENQNNNATTTQPPKDTNQTQPATQPANTAKNYPA) are disordered. Positions 53–62 (NQNNNATTTQ) are enriched in low complexity. The span at 63 to 81 (PPKDTNQTQPATQPANTAK) shows a compositional bias: polar residues. One can recognise an NEAT 1 domain in the interval 105–232 (DIGPREQVNF…IYNDPSLVKS (128 aa)). The disordered stretch occupies residues 241–324 (NDQSSSVASN…NQSDVNQQYP (84 aa)). Low complexity predominate over residues 243 to 276 (QSSSVASNQTNTNTSNQNTSTINNANNQPQATTN). The span at 277–323 (MSQPAQPKSSTNADQASSQPAHETNSNGNTNDKTNESSNQSDVNQQY) shows a compositional bias: polar residues. NEAT domains lie at 345-471 (TADN…DYVD) and 543-660 (QLTD…TKDD). Disordered stretches follow at residues 657–720 (TKDD…DNNI), 751–782 (QIAK…DSNK), and 841–868 (KTKE…GETT). 2 stretches are compositionally biased toward polar residues: residues 663–677 (SQNN…QTGQ) and 687–697 (AENSSTATNPK). Composition is skewed to basic and acidic residues over residues 698-720 (DASD…DNNI), 751-765 (QIAK…KDAD), and 841-854 (KTKE…KENK). Over residues 855–868 (LSQSKMLPKTGETT) the composition is skewed to polar residues. Residues 861-865 (LPKTG) carry the LPXTG sorting signal motif. At T864 the chain carries Pentaglycyl murein peptidoglycan amidated threonine. A propeptide spans 865–895 (GETTSSQSWWGLYALLGMLALFIPKFRKESK) (removed by sortase).

This sequence belongs to the IsdH family.

The protein resides in the secreted. It is found in the cell wall. Its function is as follows. Binds human plasma haptoglobin-hemoglobin complexes, haptoglobin and hemoglobin. Binds haptoglobin-hemoglobin complexes with significantly higher affinity than haptoglobin alone. This is Iron-regulated surface determinant protein H (isdH) from Staphylococcus aureus (strain COL).